Here is an 820-residue protein sequence, read N- to C-terminus: Leucine--tRNA ligase (820 aa).

The 'HIGH' region signature appears at 42-52 (PYPSGDLHMGH). Positions 576-580 (KMSKS) match the 'KMSKS' region motif. Lys579 contacts ATP.

Belongs to the class-I aminoacyl-tRNA synthetase family.

It is found in the cytoplasm. It carries out the reaction tRNA(Leu) + L-leucine + ATP = L-leucyl-tRNA(Leu) + AMP + diphosphate. The protein is Leucine--tRNA ligase of Coxiella burnetii (strain CbuK_Q154) (Coxiella burnetii (strain Q154)).